We begin with the raw amino-acid sequence, 199 residues long: Oligoribonuclease (199 aa).

Residues 5 to 170 (LVWIDCEMTG…ADIRESIREL (166 aa)) enclose the Exonuclease domain. Tyrosine 127 is a catalytic residue.

It belongs to the oligoribonuclease family.

Its subcellular location is the cytoplasm. Functionally, 3'-to-5' exoribonuclease specific for small oligoribonucleotides. The chain is Oligoribonuclease from Rhodococcus jostii (strain RHA1).